We begin with the raw amino-acid sequence, 180 residues long: Glycoprotein Xg (180 aa).

Residues 1-21 (MESWWGLPCLAFLCFLMHARG) form the signal peptide. At 22–142 (QRDFDLADAL…GNPEGNMVAK (121 aa)) the chain is on the extracellular side. The disordered stretch occupies residues 28–133 (ADALDDPEPT…HGGDHHSTYG (106 aa)). Pro residues predominate over residues 47–57 (KPKPPYYPQPE). The helical transmembrane segment at 143–163 (IVSPIVSVVVVTLLGAAASYF) threads the bilayer. At 164-180 (KLNNRRNCFRTHEPENV) the chain is on the cytoplasmic side.

Belongs to the CD99 family. O-glycosylated. As to expression, expressed in erythroid tissues, including thymus, bone marrow and fetal liver, and in several nonerythroid tissues, such as heart, placenta, skeletal muscle, thyroid and trachea, as well as in skin fibroblasts. Expression is low or undetectable in other tissues.

The protein resides in the cell membrane. The protein is Glycoprotein Xg (XG) of Homo sapiens (Human).